A 118-amino-acid chain; its full sequence is MARIAGINIPDHKHAVIALTAIYGIGKTRSQAICAAAGIAEDVKIRELSEEQIDKLRDEVGKFTVEGDLRREVTLNIKRLLDLGCYRGLRHRRSLPVRGQRTKTNARTRKGPRKPIKK.

Residues 94-118 are disordered; sequence SLPVRGQRTKTNARTRKGPRKPIKK.

Belongs to the universal ribosomal protein uS13 family. Part of the 30S ribosomal subunit. Forms a loose heterodimer with protein S19. Forms two bridges to the 50S subunit in the 70S ribosome.

Functionally, located at the top of the head of the 30S subunit, it contacts several helices of the 16S rRNA. In the 70S ribosome it contacts the 23S rRNA (bridge B1a) and protein L5 of the 50S subunit (bridge B1b), connecting the 2 subunits; these bridges are implicated in subunit movement. Contacts the tRNAs in the A and P-sites. The protein is Small ribosomal subunit protein uS13 of Haemophilus influenzae (strain 86-028NP).